We begin with the raw amino-acid sequence, 253 residues long: FGFR1 oncogene partner 2 (253 aa).

The stretch at 5–104 forms a coiled coil; the sequence is IEKALADAKA…SALELIMSKY (100 aa). S141 carries the phosphoserine modification. Residues 160–223 are a coiled coil; that stretch reads LERRHLEANQ…LREILQITRE (64 aa). The disordered stretch occupies residues 231–253; that stretch reads DDASESTSLSALVTNSDLSLRKS. The span at 235–253 shows a compositional bias: polar residues; it reads ESTSLSALVTNSDLSLRKS.

The protein belongs to the SIKE family. Expressed in bone marrow, spleen and thymus.

The protein localises to the cytoplasm. Functionally, may be involved in wound healing pathway. In Homo sapiens (Human), this protein is FGFR1 oncogene partner 2 (FGFR1OP2).